The sequence spans 552 residues: Polypeptide N-acetylgalactosaminyltransferase 14 (552 aa).

Residues 1-6 (MRRLTR) lie on the Cytoplasmic side of the membrane. Residues 7 to 26 (RLVLPVFGVLWITVLLFFWV) traverse the membrane as a helical; Signal-anchor for type II membrane protein segment. The Lumenal portion of the chain corresponds to 27-552 (TKRKLEVPTG…MSQHWDMVSS (526 aa)). 5 disulfide bridges follow: C101/C328, C319/C397, C430/C449, C476/C493, and C517/C538. Residues 110–215 (LPPTSIIITF…RDWLQPLLHR (106 aa)) form a catalytic subdomain A region. D151 and R176 together coordinate substrate. Mn(2+) is bound at residue D199. S200 contacts substrate. H201 serves as a coordination point for Mn(2+). A catalytic subdomain B region spans residues 274 to 336 (PIRTPIIAGG…PCSRVGHVFR (63 aa)). W305 contributes to the substrate binding site. H333 lines the Mn(2+) pocket. Substrate-binding residues include R336, H339, and Y341. Residues 415–550 (KESSIQKGNI…SLMSQHWDMV (136 aa)) form the Ricin B-type lectin domain.

Belongs to the glycosyltransferase 2 family. GalNAc-T subfamily. It depends on Mn(2+) as a cofactor. In terms of tissue distribution, detected in renal tubules (at protein level). Highly expressed in fetal and adult kidney. Widely expressed at low level. Weakly expressed in whole brain, cerebellum, thymus, lung, mammary gland, liver, stomach, small intestine, colon, pancreas, spleen, bladder, uterus, placenta, testis, ovary, skeletal muscle, leukocyte, B-cell, bone marrow, fetal brain, fetal thymus, fetal lung, fetal liver, fetal small intestine, fetal spleen, fetal skeletal and fetus. Detected in renal tubules (at protein level).

The protein resides in the golgi apparatus membrane. It catalyses the reaction L-seryl-[protein] + UDP-N-acetyl-alpha-D-galactosamine = a 3-O-[N-acetyl-alpha-D-galactosaminyl]-L-seryl-[protein] + UDP + H(+). The catalysed reaction is L-threonyl-[protein] + UDP-N-acetyl-alpha-D-galactosamine = a 3-O-[N-acetyl-alpha-D-galactosaminyl]-L-threonyl-[protein] + UDP + H(+). Its pathway is protein modification; protein glycosylation. Catalyzes the initial reaction in O-linked oligosaccharide biosynthesis, the transfer of an N-acetyl-D-galactosamine residue to a serine or threonine residue on the protein receptor. Displays activity toward mucin-derived peptide substrates such as Muc2, Muc5AC, Muc7, and Muc13 (-58). May be involved in O-glycosylation in kidney. The protein is Polypeptide N-acetylgalactosaminyltransferase 14 (GALNT14) of Homo sapiens (Human).